A 753-amino-acid polypeptide reads, in one-letter code: 5-methyltetrahydropteroyltriglutamate--homocysteine methyltransferase (753 aa).

Residues 17–20 and Lys-117 each bind 5-methyltetrahydropteroyltri-L-glutamate; that span reads RELK. L-homocysteine-binding positions include 431–433 and Glu-484; that span reads IGS. L-methionine is bound by residues 431-433 and Glu-484; that span reads IGS. Residues 515 to 516 and Trp-561 each bind 5-methyltetrahydropteroyltri-L-glutamate; that span reads RC. Asp-599 contacts L-homocysteine. An L-methionine-binding site is contributed by Asp-599. Residue Glu-605 coordinates 5-methyltetrahydropteroyltri-L-glutamate. Zn(2+)-binding residues include His-641, Cys-643, and Glu-665. The active-site Proton donor is His-694. Residue Cys-726 participates in Zn(2+) binding.

This sequence belongs to the vitamin-B12 independent methionine synthase family. Zn(2+) is required as a cofactor.

The enzyme catalyses 5-methyltetrahydropteroyltri-L-glutamate + L-homocysteine = tetrahydropteroyltri-L-glutamate + L-methionine. It functions in the pathway amino-acid biosynthesis; L-methionine biosynthesis via de novo pathway; L-methionine from L-homocysteine (MetE route): step 1/1. Catalyzes the transfer of a methyl group from 5-methyltetrahydrofolate to homocysteine resulting in methionine formation. The polypeptide is 5-methyltetrahydropteroyltriglutamate--homocysteine methyltransferase (Escherichia coli (strain UTI89 / UPEC)).